The sequence spans 181 residues: ADP-ribosylation factor 1 (181 aa).

The N-myristoyl glycine moiety is linked to residue Gly-2. The segment at 3–16 (LYVSRLFNRLFQKK) is important for the stable binding to the membranes. GTP-binding positions include 27-32 (AAGKTT), 126-129 (NKQD), and Ala-160.

The protein belongs to the small GTPase superfamily. Arf family. May interact with GTPase RAB5b.

The protein resides in the golgi apparatus membrane. The enzyme catalyses GTP + H2O = GDP + phosphate + H(+). Alternates between an inactive GDP-bound form and an active GTP-bound form. Intrinsic GTPase activity is almost undetectable in vitro. Activated by a guanine nucleotide-exchange factor (GEF) and inactivated by GTPase-activating protein ARFGAP1. In terms of biological role, small GTPase involved in protein trafficking between different compartments. Modulates vesicle budding and uncoating within the Golgi complex. In its GTP-bound form, triggers the recruitment of coatomer proteins to the Golgi membrane. The hydrolysis of ARF1-bound GTP, which is mediated by ARFGAPs proteins, is required for dissociation of coat proteins from Golgi membranes and vesicles. Regulates the transport of N-acylated AK2 to the parasitophorous vacuole membrane. May be involved in the activation of lipid kinase PIP5K. In Plasmodium falciparum (isolate 3D7), this protein is ADP-ribosylation factor 1.